The primary structure comprises 514 residues: Putative thymidine phosphorylase (514 aa).

Belongs to the thymidine/pyrimidine-nucleoside phosphorylase family. Type 2 subfamily.

The catalysed reaction is thymidine + phosphate = 2-deoxy-alpha-D-ribose 1-phosphate + thymine. The polypeptide is Putative thymidine phosphorylase (Sphingopyxis alaskensis (strain DSM 13593 / LMG 18877 / RB2256) (Sphingomonas alaskensis)).